Reading from the N-terminus, the 170-residue chain is MAKLTILEFPDERLRTKAAPVETVDDETRKLVDDMLETMYDAQGIGLAATQVDVHRRVIVMDVSDDRSQPRVLINPEYTPLGDEREPMQEGCLSIPEYYAEVPRALRVSLKALDRDGNPYELEADGLLAHCIQHEYDHLEGVLFVDYLSPLKRDRVLKKMQKRHRAMQDA.

Fe cation is bound by residues Cys92 and His134. Residue Glu135 is part of the active site. His138 contacts Fe cation.

It belongs to the polypeptide deformylase family. It depends on Fe(2+) as a cofactor.

It carries out the reaction N-terminal N-formyl-L-methionyl-[peptide] + H2O = N-terminal L-methionyl-[peptide] + formate. Its function is as follows. Removes the formyl group from the N-terminal Met of newly synthesized proteins. Requires at least a dipeptide for an efficient rate of reaction. N-terminal L-methionine is a prerequisite for activity but the enzyme has broad specificity at other positions. The protein is Peptide deformylase of Chromohalobacter salexigens (strain ATCC BAA-138 / DSM 3043 / CIP 106854 / NCIMB 13768 / 1H11).